The sequence spans 103 residues: Large ribosomal subunit protein bL21 (103 aa).

It belongs to the bacterial ribosomal protein bL21 family. In terms of assembly, part of the 50S ribosomal subunit. Contacts protein L20.

Functionally, this protein binds to 23S rRNA in the presence of protein L20. This chain is Large ribosomal subunit protein bL21, found in Thermobifida fusca (strain YX).